An 838-amino-acid polypeptide reads, in one-letter code: Protein kintoun (838 aa).

Disordered stretches follow at residues 106-125, 212-238, 370-411, 557-696, and 776-838; these read RPKN…LNWS, NPTA…GKPE, LRHF…TSSP, NAPL…DSCS, and QQRR…EMDD. A compositionally biased stretch (polar residues) spans 114 to 125; that stretch reads DPSSGSRGLNWS. The segment covering 370 to 380 has biased composition (basic and acidic residues); that stretch reads LRHFSREDSGV. At Ser-378 the chain carries Phosphoserine. The segment covering 389–398 has biased composition (acidic residues); sequence PVEEDPDGEL. The span at 557–572 shows a compositional bias: basic and acidic residues; that stretch reads NAPLDVEFERNQEGHA. Acidic residues predominate over residues 583–592; that stretch reads EEEEEEEDKE. Residues 601 to 611 show a composition bias toward low complexity; sequence DQQQQQQVQNK. 2 stretches are compositionally biased toward basic residues: residues 612 to 623 and 673 to 683; these read KSGKKQRKRNKK and RSHRGILKRFS. Position 781 is a phosphoserine (Ser-781). A compositionally biased stretch (basic and acidic residues) spans 789-802; that stretch reads EETRGSALKQKENP.

The protein belongs to the PIH1 family. Kintoun subfamily. Interacts with Pp1alpha-96A, Pp1-87B, Pp1-13C and flw.

The protein localises to the cytoplasm. Its function is as follows. Required for cytoplasmic pre-assembly of axonemal dyneins, thereby playing a central role in motility in cilia and flagella. Involved in pre-assembly of dynein arm complexes in the cytoplasm before intraflagellar transport loads them for the ciliary compartment. The chain is Protein kintoun from Drosophila sechellia (Fruit fly).